The sequence spans 438 residues: Cytochrome P450 monooxygenase claJ (438 aa).

Cysteine 378 lines the heme pocket.

It belongs to the cytochrome P450 family. Heme is required as a cofactor.

Its pathway is secondary metabolite biosynthesis. Its function is as follows. Cytochrome P450 monooxygenase; part of the cla gene cluster that produces clavatol and ortho-quinone methide. The clavatol biosynthesis cluster cla and the terrestric acid cluster tra are both involved in the production of peniphenones and penilactones. The non-reducing PKS claF is responsible for the formation of clavatol from successive condensations of 3 malonyl-CoA units, presumably with a simple acetyl-CoA starter unit, and 2 methylation steps. The esterase claE probably collaborates with claF by catalyzing the hydrolysis of ACP-bound acyl intermediates to free the ACP from stalled intermediates. The clavatol oxidase claD then converts clavatol to hydroxyclavatol. Spontaneous dehydration of hydroxyclavatol leads to the accumulation of the highly active ortho-quinone methide. On the other hand, the PKS-NRPS hybrid traA is involved in the formation of crustosic acid, with the help of traB and traD. The polyketide synthase module (PKS) of traA is responsible for the synthesis of the polyketide backbone via the condensation of an acetyl-CoA starter unit with 3 malonyl-CoA units. The downstream nonribosomal peptide synthetase (NRPS) module then amidates the carboxyl end of the polyketide with L-malic acid. Because traA lacks a designated enoylreductase (ER) domain, the required activity is provided the enoyl reductase traG. Crustosic acid undergoes decarboxylation and isomerization to the terrestric acid, catalyzed by the 2-oxoglutarate-dependent dioxygenase traH. Both acids are further converted to the 2 gamma-butyrolactones (R)-5-methyltetronic acid and (S)-5-carboxylmethyltetronic acid, with involvement of the cytochrome P450 monooxygenase claJ. Spontaneous addition of the methide to these gamma-butyrolactones leads to peniphenone D and penilactone D, which undergo again stereospecific attacking by methide to give penilactones A and B. This is Cytochrome P450 monooxygenase claJ from Penicillium crustosum (Blue mold fungus).